A 481-amino-acid chain; its full sequence is Sterol 14-alpha demethylase (481 aa).

The helical transmembrane segment at 1–21 threads the bilayer; sequence MFIEAIVLALTALILYSVYSV. Heme is bound at residue C422.

This sequence belongs to the cytochrome P450 family. Heme serves as cofactor.

It localises to the membrane. It carries out the reaction a 14alpha-methyl steroid + 3 reduced [NADPH--hemoprotein reductase] + 3 O2 = a Delta(14) steroid + formate + 3 oxidized [NADPH--hemoprotein reductase] + 4 H2O + 4 H(+). Its pathway is steroid biosynthesis; zymosterol biosynthesis; zymosterol from lanosterol: step 1/6. Functionally, catalyzes C14-demethylation of lanosterol which is critical for ergosterol biosynthesis. It transforms lanosterol into 4,4'-dimethyl cholesta-8,14,24-triene-3-beta-ol. Favors C4 dimethylated substrates, the substrate preference order is 24-methylenedihydrolanosterol &gt; 24,25-dihydrolanosterol &gt; lanosterol &gt; obtusifoliol &gt; norlanosterol. The chain is Sterol 14-alpha demethylase from Trypanosoma cruzi (strain CL Brener).